A 202-amino-acid polypeptide reads, in one-letter code: MSRYRGPRVRIIRRLGALPGLTNKTPQLKSSSINQSTSNKKISQYRIRLEEKQKLRFHYGITERQLLNYVRIARKAKGSTGEILLQLLEMRLDNVIFRLGMTPTIPGARQLVNHRHILVNGYIVDIPSYRCKPQDFITIKNQRKSEAIISKNIEFYQKYKIPNHLTYSSLEKKGLVNQILNRKSIGLKINELLVVEYYSRQA.

The 64-residue stretch at 90–153 (MRLDNVIFRL…KSEAIISKNI (64 aa)) folds into the S4 RNA-binding domain.

Belongs to the universal ribosomal protein uS4 family. Part of the 30S ribosomal subunit. Contacts protein S5. The interaction surface between S4 and S5 is involved in control of translational fidelity.

The protein localises to the plastid. Its subcellular location is the chloroplast. Its function is as follows. One of the primary rRNA binding proteins, it binds directly to 16S rRNA where it nucleates assembly of the body of the 30S subunit. With S5 and S12 plays an important role in translational accuracy. This chain is Small ribosomal subunit protein uS4c (rps4), found in Hypopterygium laricinum (Moss).